Consider the following 1139-residue polypeptide: Retinoblastoma-like protein 2 (1139 aa).

The disordered stretch occupies residues 1-45 (MPSGGDQSPPPPPPPPAAAASDEEEEDDGEAEDAAPPAESPTPQI). Pro residues predominate over residues 8-17 (SPPPPPPPPA). The span at 21–33 (SDEEEEDDGEAED) shows a compositional bias: acidic residues. The residue at position 413 (S413) is a Phosphoserine. At T417 the chain carries Phosphothreonine. The domain A stretch occupies residues 417–616 (TPVSTATHSL…EKIRDNENRV (200 aa)). The pocket; binds E1A stretch occupies residues 417-1024 (TPVSTATHSL…KQIKTFAMKY (608 aa)). The O-linked (GlcNAc) serine glycan is linked to S420. The tract at residues 617-827 (PTCEEVMPPQ…KQGQSVTSSS (211 aa)) is spacer. A Phosphoserine modification is found at S639. The residue at position 642 (T642) is a Phosphothreonine. The interval 654 to 678 (GGLGRSITSPTTLYDRYSSPPASTT) is disordered. A phosphoserine mark is found at S662, S672, and S688. The span at 810-827 (ISPGGQQQKQGQSVTSSS) shows a compositional bias: low complexity. Disordered stretches follow at residues 810–831 (ISPGGQQQKQGQSVTSSSNRPR) and 933–999 (KGKR…DMEE). Residues 828-1024 (NRPRKTSSLS…KQIKTFAMKY (197 aa)) form a domain B region. Positions 941-955 (SGSSDSRSHQNSPTE) are enriched in polar residues. S948, S952, S966, S971, S972, and S973 each carry phosphoserine. A compositionally biased stretch (low complexity) spans 964-973 (DSSPVMRSSS). The residue at position 974 (T974) is a Phosphothreonine. Positions 977 to 987 (VPQPSSAPPTP) are enriched in pro residues. 2 positions are modified to phosphoserine: S981 and S982. Residue T986 is modified to Phosphothreonine. S1035, S1068, S1080, and S1112 each carry phosphoserine.

Belongs to the retinoblastoma protein (RB) family. In terms of assembly, interacts with AATF. Interacts with KMT5B, KMT5C and USP4. Component of the DREAM complex (also named LINC complex) at least composed of E2F4, E2F5, LIN9, LIN37, LIN52, LIN54, MYBL1, MYBL2, RBL1, RBL2, RBBP4, TFDP1 and TFDP2. The complex exists in quiescent cells where it represses cell cycle-dependent genes. It dissociates in S phase when LIN9, LIN37, LIN52 and LIN54 form a subcomplex that binds to MYBL2. Interacts with RINT1. Interacts with PML (isoform PML-1, isoform PML-2, isoform PML-3, isoform PML-4 and isoform PML-5). Interacts with RBBP9. Interacts with CD53. (Microbial infection) Interacts with JC virus small t antigen. In terms of processing, during G0 and early G1 phase of the cell cycle, phosphorylated on Ser-639 and on 5 sites within the domain B. Phosphorylation on Ser-672 in G1 leads to its ubiquitin-dependent proteolysis.

It localises to the nucleus. Its function is as follows. Key regulator of entry into cell division. Directly involved in heterochromatin formation by maintaining overall chromatin structure and, in particular, that of constitutive heterochromatin by stabilizing histone methylation. Recruits and targets histone methyltransferases KMT5B and KMT5C, leading to epigenetic transcriptional repression. Controls histone H4 'Lys-20' trimethylation. Probably acts as a transcription repressor by recruiting chromatin-modifying enzymes to promoters. Potent inhibitor of E2F-mediated trans-activation, associates preferentially with E2F5. Binds to cyclins A and E. Binds to and may be involved in the transforming capacity of the adenovirus E1A protein. May act as a tumor suppressor. The sequence is that of Retinoblastoma-like protein 2 (RBL2) from Homo sapiens (Human).